The sequence spans 27 residues: Secretin (27 aa).

At L27 the chain carries Leucine amide.

It belongs to the glucagon family.

It localises to the secreted. Hormone involved in different processes, such as regulation of the pH of the duodenal content, food intake and water homeostasis. Exerts its biological effects by binding to secretin receptor (SCTR), a G-protein coupled receptor expressed in the basolateral domain of several cells. Acts as a key gastrointestinal hormone by regulating the pH of the duodenal content. Secreted by S cells of the duodenum in the crypts of Lieberkuehn and regulates the pH of the duodenum by (1) inhibiting the secretion of gastric acid from the parietal cells of the stomach and (2) stimulating the production of bicarbonate (NaHCO(3)) from the ductal cells of the pancreas. Production of bicarbonate is essential to neutralize the pH and ensure no damage is done to the small intestine by the gastric acid. In addition to regulating the pH of the duodenal content, plays a central role in diet induced thermogenesis: acts as a non-sympathetic brown fat (BAT) activator mediating prandial thermogenesis, which consequentially induces satiation. Mechanistically, secretin released by the gut after a meal binds to secretin receptor (SCTR) in brown adipocytes, activating brown fat thermogenesis by stimulating lipolysis, which is sensed in the brain and promotes satiation. Also able to stimulate lipolysis in white adipocytes. Also plays an important role in cellular osmoregulation: released into the systemic circulation in response to hyperosmolality and acts at different levels in the hypothalamus, pituitary and kidney to regulate water homeostasis. Also plays a role in the central nervous system, possibly by acting as a neuropeptide hormone: required for hippocampal synaptic function and neural progenitor cells maintenance. The polypeptide is Secretin (Oryctolagus cuniculus (Rabbit)).